Reading from the N-terminus, the 117-residue chain is Large ribosomal subunit protein uL24 (117 aa).

It belongs to the universal ribosomal protein uL24 family. Part of the 50S ribosomal subunit.

Functionally, one of two assembly initiator proteins, it binds directly to the 5'-end of the 23S rRNA, where it nucleates assembly of the 50S subunit. Its function is as follows. One of the proteins that surrounds the polypeptide exit tunnel on the outside of the subunit. This is Large ribosomal subunit protein uL24 from Thermosynechococcus vestitus (strain NIES-2133 / IAM M-273 / BP-1).